The sequence spans 739 residues: Phosphoribosylformylglycinamidine synthase subunit PurL (739 aa).

His53 is a catalytic residue. Residues Tyr56 and Lys95 each coordinate ATP. Glu97 provides a ligand contact to Mg(2+). Substrate contacts are provided by residues Ser98 to His101 and Arg120. Residue His99 is the Proton acceptor of the active site. Asp121 provides a ligand contact to Mg(2+). Residue Gln244 participates in substrate binding. Position 274 (Asp274) interacts with Mg(2+). Residue Glu318 to Gln320 coordinates substrate. Residues Asp501 and Gly538 each contribute to the ATP site. Residue Asn539 participates in Mg(2+) binding. Ser541 contributes to the substrate binding site.

Belongs to the FGAMS family. In terms of assembly, monomer. Part of the FGAM synthase complex composed of 1 PurL, 1 PurQ and 2 PurS subunits.

Its subcellular location is the cytoplasm. It catalyses the reaction N(2)-formyl-N(1)-(5-phospho-beta-D-ribosyl)glycinamide + L-glutamine + ATP + H2O = 2-formamido-N(1)-(5-O-phospho-beta-D-ribosyl)acetamidine + L-glutamate + ADP + phosphate + H(+). It functions in the pathway purine metabolism; IMP biosynthesis via de novo pathway; 5-amino-1-(5-phospho-D-ribosyl)imidazole from N(2)-formyl-N(1)-(5-phospho-D-ribosyl)glycinamide: step 1/2. In terms of biological role, part of the phosphoribosylformylglycinamidine synthase complex involved in the purines biosynthetic pathway. Catalyzes the ATP-dependent conversion of formylglycinamide ribonucleotide (FGAR) and glutamine to yield formylglycinamidine ribonucleotide (FGAM) and glutamate. The FGAM synthase complex is composed of three subunits. PurQ produces an ammonia molecule by converting glutamine to glutamate. PurL transfers the ammonia molecule to FGAR to form FGAM in an ATP-dependent manner. PurS interacts with PurQ and PurL and is thought to assist in the transfer of the ammonia molecule from PurQ to PurL. This Listeria monocytogenes serotype 4a (strain HCC23) protein is Phosphoribosylformylglycinamidine synthase subunit PurL.